Reading from the N-terminus, the 479-residue chain is Type I inositol polyphosphate 5-phosphatase 8 (479 aa).

2 catalytic regions span residues 300–315 (DKVIWLGDLNYRLRAS) and 379–394 (KRRTPAWCDRILWKGD).

Belongs to the inositol polyphosphate 5-phosphatase family.

The sequence is that of Type I inositol polyphosphate 5-phosphatase 8 from Arabidopsis thaliana (Mouse-ear cress).